The chain runs to 357 residues: Alanine racemase (357 aa).

Lys34 functions as the Proton acceptor; specific for D-alanine in the catalytic mechanism. Lys34 bears the N6-(pyridoxal phosphate)lysine mark. Arg129 provides a ligand contact to substrate. Tyr254 functions as the Proton acceptor; specific for L-alanine in the catalytic mechanism. Met302 is a substrate binding site.

Belongs to the alanine racemase family. The cofactor is pyridoxal 5'-phosphate.

The catalysed reaction is L-alanine = D-alanine. It participates in amino-acid biosynthesis; D-alanine biosynthesis; D-alanine from L-alanine: step 1/1. In terms of biological role, catalyzes the interconversion of L-alanine and D-alanine. Likely plays an important role in supplying D-alanine, which is an indispensable constituent in the biosynthesis of bacterial cell-wall peptidoglycan. The protein is Alanine racemase of Aeromonas hydrophila subsp. hydrophila (strain ATCC 7966 / DSM 30187 / BCRC 13018 / CCUG 14551 / JCM 1027 / KCTC 2358 / NCIMB 9240 / NCTC 8049).